A 284-amino-acid chain; its full sequence is UPF0276 protein Ping_0944 (284 aa).

It belongs to the UPF0276 family.

This is UPF0276 protein Ping_0944 from Psychromonas ingrahamii (strain DSM 17664 / CCUG 51855 / 37).